A 460-amino-acid chain; its full sequence is MLO-like protein 9 (460 aa).

The Extracellular portion of the chain corresponds to 1 to 21 (MAGGGGGGGGEGPRQLDQTPT). Residues 22–42 (WAVSTVCGVIILISIILELII) traverse the membrane as a helical segment. At 43-67 (HKVGEVFERKKKKALFEALEKIKNE) the chain is on the cytoplasmic side. The chain crosses the membrane as a helical span at residues 68–88 (LMVLGFISLLLTFGQNYIASI). Over 89–158 (CVPSRYGHAM…ISLNALHQVH (70 aa)) the chain is Extracellular. The helical transmembrane segment at 159–179 (IFIFFLAVFHVIYSAITMMLG) threads the bilayer. Residues 180–289 (RAKIRGWKVW…KVVVGIRPEL (110 aa)) are Cytoplasmic-facing. Residues 290–310 (WAFVMLFLLFDVHGWYVTAVI) traverse the membrane as a helical segment. The Extracellular segment spans residues 311 to 315 (TMIPP). A helical membrane pass occupies residues 316-336 (LLTLAIGTKLQAIISYMALEI). Over 337-366 (QERHAVIQGMPVVNVSDQHFWFEKPDLVLH) the chain is Cytoplasmic. The helical transmembrane segment at 367-387 (MIHFVLFQNAFEITYFFWIWY) threads the bilayer. The Extracellular segment spans residues 388–398 (EFGLRSCFHHH). The chain crosses the membrane as a helical span at residues 399 to 419 (FGLIIIRVCLGVGVQFLCSYI). Topologically, residues 420–460 (TLPLYALVTQMGSTMKRSVFDEQTSKALEQWHKKARKKNEK) are cytoplasmic. The calmodulin-binding stretch occupies residues 441–460 (EQTSKALEQWHKKARKKNEK).

The protein belongs to the MLO family.

It is found in the membrane. Functionally, may be involved in modulation of pathogen defense and leaf cell death. Activity seems to be regulated by Ca(2+)-dependent calmodulin binding and seems not to require heterotrimeric G proteins. The polypeptide is MLO-like protein 9 (MLO9) (Arabidopsis thaliana (Mouse-ear cress)).